Reading from the N-terminus, the 391-residue chain is cAMP-dependent protein kinase regulatory subunit (391 aa).

Residues Met1–Gln84 form a disordered region. The interval Met1–Phe131 is dimerization and phosphorylation. Polar residues predominate over residues Thr38–Phe55. At Ser92 the chain carries Phosphoserine. 3',5'-cyclic AMP is bound by residues Leu132–Glu261, Glu210, Arg219, Leu264–Thr381, Glu331, and Arg340.

The protein belongs to the cAMP-dependent kinase regulatory chain family. As to quaternary structure, tetramer, composed of 2 regulatory (R) and 2 catalytic (C) subunits. In the presence of cAMP it dissociates into 2 active monomeric C subunits and an R dimer.

The polypeptide is cAMP-dependent protein kinase regulatory subunit (PKAR) (Colletotrichum orbiculare (strain 104-T / ATCC 96160 / CBS 514.97 / LARS 414 / MAFF 240422) (Cucumber anthracnose fungus)).